Reading from the N-terminus, the 1381-residue chain is Hepatocyte growth factor receptor (1381 aa).

Positions 1 to 24 are cleaved as a signal peptide; it reads MKAPAVLAPGILLLLFTLVQRSNG. At 25–932 the chain is on the extracellular side; it reads ECKEALTKSE…VIVQPDQNFT (908 aa). Residues 27–515 enclose the Sema domain; that stretch reads KEALTKSEMN…TGKKITKIPL (489 aa). N-linked (GlcNAc...) asparagine glycosylation is present at Asn45. 4 cysteine pairs are disulfide-bonded: Cys95–Cys101, Cys98–Cys160, Cys133–Cys141, and Cys172–Cys175. An N-linked (GlcNAc...) asparagine glycan is attached at Asn106. A glycan (N-linked (GlcNAc...) asparagine) is linked at Asn149. Asn202 carries an N-linked (GlcNAc...) asparagine glycan. Cystine bridges form between Cys298/Cys363 and Cys385/Cys397. Asn399 is a glycosylation site (N-linked (GlcNAc...) asparagine). 4 disulfide bridges follow: Cys520–Cys538, Cys526–Cys561, Cys529–Cys545, and Cys541–Cys551. 3 IPT/TIG domains span residues 563-655, 657-739, and 742-836; these read PTIY…FSYV, PIIT…FSYR, and PIVY…LIYV. A glycan (O-linked (Man) threonine) is linked at Thr582. Asn607 and Asn635 each carry an N-linked (GlcNAc...) asparagine glycan. O-linked (Man) threonine glycans are attached at residues Thr676 and Thr761. Residues Asn785, Asn879, and Asn930 are each glycosylated (N-linked (GlcNAc...) asparagine). A helical transmembrane segment spans residues 933 to 955; that stretch reads GLIAGVVSISIALLLLLGLFLWL. Topologically, residues 956 to 1381 are cytoplasmic; sequence KKRKQIKDLG…QDNPDGEVDT (426 aa). Ser966 carries the phosphoserine modification. Thr977 carries the post-translational modification Phosphothreonine. 3 positions are modified to phosphoserine: Ser990, Ser997, and Ser1000. The residue at position 1003 (Tyr1003) is a Phosphotyrosine. The Protein kinase domain occupies 1078 to 1345; the sequence is VHFNEVIGRG…RISAIFSTFI (268 aa). Residues 1084 to 1092 and Lys1110 each bind ATP; that span reads IGRGHFGCV. Asp1204 functions as the Proton acceptor in the catalytic mechanism. The interval 1212 to 1381 is interaction with RANBP9; sequence LDEKFTVKVA…QDNPDGEVDT (170 aa). Phosphotyrosine is present on Tyr1230. A phosphotyrosine; by autocatalysis mark is found at Tyr1234 and Tyr1235. A Phosphothreonine modification is found at Thr1289. Residues 1320–1359 are interaction with MUC20; that stretch reads WHPKAEMRPSFSELVSRISAIFSTFIGEHYVHVNATYVNV. Phosphotyrosine; by autocatalysis is present on residues Tyr1349 and Tyr1356. Tyr1365 is subject to Phosphotyrosine.

This sequence belongs to the protein kinase superfamily. Tyr protein kinase family. As to quaternary structure, heterodimer made of an alpha chain (50 kDa) and a beta chain (145 kDa) which are disulfide linked. Binds PLXNB1. Interacts when phosphorylated with downstream effectors including STAT3, PIK3R1, SRC, PCLG1, GRB2 and GAB1. Interacts with SPSB1, SPSB2 and SPSB4. Interacts with INPP5D/SHIP1. When phosphorylated at Tyr-1356, interacts with INPPL1/SHIP2. Interacts with RANBP9 and RANBP10, as well as SPSB1, SPSB2, SPSB3 and SPSB4. SPSB1 binding occurs in the presence and in the absence of HGF, however HGF treatment has a positive effect on this interaction. Interacts with MUC20; prevents interaction with GRB2 and suppresses hepatocyte growth factor-induced cell proliferation. Interacts with GRB10. Interacts with PTPN1 and PTPN2. Interacts with tensin TNS3. Interacts (when phosphorylated) with tensin TNS4 (via SH2 domain); the interaction increases MET protein stability by inhibiting MET endocytosis and subsequent lysosomal degradation. In terms of processing, autophosphorylated in response to ligand binding on Tyr-1234 and Tyr-1235 in the kinase domain leading to further phosphorylation of Tyr-1349 and Tyr-1356 in the C-terminal multifunctional docking site. Dephosphorylated by PTPRJ at Tyr-1349 and Tyr-1365. Dephosphorylated by PTPN1 and PTPN2. Ubiquitinated. Ubiquitination by CBL regulates the receptor stability and activity through proteasomal degradation. Post-translationally, O-mannosylation of IPT/TIG domains by TMEM260 is required for protein maturation. O-mannosylated residues are composed of single mannose glycans that are not elongated or modified.

Its subcellular location is the membrane. The catalysed reaction is L-tyrosyl-[protein] + ATP = O-phospho-L-tyrosyl-[protein] + ADP + H(+). Its activity is regulated as follows. In its inactive state, the C-terminal tail interacts with the catalytic domain and inhibits the kinase activity. Upon ligand binding, the C-terminal tail is displaced and becomes phosphorylated, thus increasing the kinase activity. Its function is as follows. Receptor tyrosine kinase that transduces signals from the extracellular matrix into the cytoplasm by binding to hepatocyte growth factor/HGF ligand. Regulates many physiological processes including proliferation, scattering, morphogenesis and survival. Ligand binding at the cell surface induces autophosphorylation of MET on its intracellular domain that provides docking sites for downstream signaling molecules. Following activation by ligand, interacts with the PI3-kinase subunit PIK3R1, PLCG1, SRC, GRB2, STAT3 or the adapter GAB1. Recruitment of these downstream effectors by MET leads to the activation of several signaling cascades including the RAS-ERK, PI3 kinase-AKT, or PLCgamma-PKC. The RAS-ERK activation is associated with the morphogenetic effects while PI3K/AKT coordinates prosurvival effects. During embryonic development, MET signaling plays a role in gastrulation, development and migration of muscles and neuronal precursors, angiogenesis and kidney formation. In adults, participates in wound healing as well as organ regeneration and tissue remodeling. Also promotes differentiation and proliferation of hematopoietic cells. The polypeptide is Hepatocyte growth factor receptor (MET) (Aotus nancymaae (Ma's night monkey)).